A 196-amino-acid polypeptide reads, in one-letter code: Interleukin-23 subunit alpha (196 aa).

The first 21 residues, M1–A21, serve as a signal peptide directing secretion.

This sequence belongs to the IL-6 superfamily. Heterodimer with IL12B; disulfide-linked. The heterodimer is known as interleukin IL-23. Interacts with IL23R; this interaction enables recruitment of IL12RB1.

Its subcellular location is the secreted. Functionally, associates with IL12B to form the pro-inflammatory cytokine IL-23 that plays different roles in innate and adaptive immunity. Released by antigen-presenting cells such as dendritic cells or macrophages, binds to a heterodimeric receptor complex composed of IL12RB1 and IL23R to activate JAK2 and TYK2 which then phosphorylate the receptor to form a docking site leading to the phosphorylation of STAT3 and STAT4. This process leads to activation of several pathways including p38 MAPK or NF-kappa-B and promotes the production of pro-inflammatory cytokines such as interleukin-17A/IL17A. In turn, participates in the early and effective intracellular bacterial clearance. Promotes the expansion and survival of T-helper 17 cells, a CD4-positive helper T-cell subset that produces IL-17, as well as other IL-17-producing cells. This chain is Interleukin-23 subunit alpha (Il23a), found in Rattus norvegicus (Rat).